A 212-amino-acid polypeptide reads, in one-letter code: Leucyl/phenylalanyl-tRNA--protein transferase (212 aa).

The protein belongs to the L/F-transferase family.

The protein resides in the cytoplasm. It carries out the reaction N-terminal L-lysyl-[protein] + L-leucyl-tRNA(Leu) = N-terminal L-leucyl-L-lysyl-[protein] + tRNA(Leu) + H(+). The enzyme catalyses N-terminal L-arginyl-[protein] + L-leucyl-tRNA(Leu) = N-terminal L-leucyl-L-arginyl-[protein] + tRNA(Leu) + H(+). It catalyses the reaction L-phenylalanyl-tRNA(Phe) + an N-terminal L-alpha-aminoacyl-[protein] = an N-terminal L-phenylalanyl-L-alpha-aminoacyl-[protein] + tRNA(Phe). Functions in the N-end rule pathway of protein degradation where it conjugates Leu, Phe and, less efficiently, Met from aminoacyl-tRNAs to the N-termini of proteins containing an N-terminal arginine or lysine. The chain is Leucyl/phenylalanyl-tRNA--protein transferase from Jannaschia sp. (strain CCS1).